The sequence spans 362 residues: Probable cinnamyl alcohol dehydrogenase 8D (362 aa).

Cysteine 45 is a binding site for Zn(2+). Position 47 (threonine 47) interacts with NADP(+). Histidine 67, glutamate 68, cysteine 98, cysteine 101, cysteine 104, cysteine 112, and cysteine 161 together coordinate Zn(2+). Residues threonine 165, 186–191, 209–214, threonine 249, glycine 273, and 296–298 each bind NADP(+); these read GLGGLG, SSSPAK, and NGV.

Belongs to the zinc-containing alcohol dehydrogenase family. In terms of assembly, homodimer. Requires Zn(2+) as cofactor.

The enzyme catalyses (E)-cinnamyl alcohol + NADP(+) = (E)-cinnamaldehyde + NADPH + H(+). It carries out the reaction (E)-coniferol + NADP(+) = (E)-coniferaldehyde + NADPH + H(+). The catalysed reaction is (E)-sinapyl alcohol + NADP(+) = (E)-sinapaldehyde + NADPH + H(+). It catalyses the reaction (E)-4-coumaroyl alcohol + NADP(+) = (E)-4-coumaraldehyde + NADPH + H(+). The enzyme catalyses (E)-caffeyl alcohol + NADP(+) = (E)-caffeyl aldehyde + NADPH + H(+). The protein operates within aromatic compound metabolism; phenylpropanoid biosynthesis. Involved in lignin biosynthesis. Catalyzes the final step specific for the production of lignin monomers. Catalyzes the NADPH-dependent reduction of coniferaldehyde, 5-hydroxyconiferaldehyde, sinapaldehyde, 4-coumaraldehyde and caffeyl aldehyde to their respective alcohols. The chain is Probable cinnamyl alcohol dehydrogenase 8D from Oryza sativa subsp. japonica (Rice).